Reading from the N-terminus, the 123-residue chain is UPF0102 protein SPO0400 (123 aa).

This sequence belongs to the UPF0102 family.

The chain is UPF0102 protein SPO0400 from Ruegeria pomeroyi (strain ATCC 700808 / DSM 15171 / DSS-3) (Silicibacter pomeroyi).